Here is a 210-residue protein sequence, read N- to C-terminus: Regulatory protein RecX (210 aa).

The tract at residues 28–47 is disordered; that stretch reads SRRQEEGAASSLFDREAEEK.

This sequence belongs to the RecX family.

It localises to the cytoplasm. In terms of biological role, modulates RecA activity. The protein is Regulatory protein RecX of Corynebacterium efficiens (strain DSM 44549 / YS-314 / AJ 12310 / JCM 11189 / NBRC 100395).